Consider the following 327-residue polypeptide: DNA-directed RNA polymerase subunit alpha (327 aa).

Residues 1–233 (MVREKVKVST…NLFIPFLHVE (233 aa)) form an alpha N-terminal domain (alpha-NTD) region. Residues 267-327 (LAFQYIFIDQ…KKILDILEKK (61 aa)) are alpha C-terminal domain (alpha-CTD).

The protein belongs to the RNA polymerase alpha chain family. In plastids the minimal PEP RNA polymerase catalytic core is composed of four subunits: alpha, beta, beta', and beta''. When a (nuclear-encoded) sigma factor is associated with the core the holoenzyme is formed, which can initiate transcription.

The protein localises to the plastid. The protein resides in the chloroplast. It carries out the reaction RNA(n) + a ribonucleoside 5'-triphosphate = RNA(n+1) + diphosphate. In terms of biological role, DNA-dependent RNA polymerase catalyzes the transcription of DNA into RNA using the four ribonucleoside triphosphates as substrates. This Draba nemorosa (Woodland whitlowgrass) protein is DNA-directed RNA polymerase subunit alpha.